The following is a 196-amino-acid chain: tRNA(Phe) 7-((3-amino-3-carboxypropyl)-4-demethylwyosine(37)-N(4))-methyltransferase 1 (196 aa).

It belongs to the TYW3 family.

It carries out the reaction 4-demethyl-7-[(3S)-3-amino-3-carboxypropyl]wyosine(37) in tRNA(Phe) + S-adenosyl-L-methionine = 7-[(3S)-3-amino-3-carboxypropyl]wyosine(37) in tRNA(Phe) + S-adenosyl-L-homocysteine + H(+). In terms of biological role, S-adenosyl-L-methionine-dependent methyltransferase that acts as a component of the wyosine derivatives biosynthesis pathway. Probably methylates N-4 position of wybutosine-86 to produce wybutosine-72. This Pyrococcus horikoshii (strain ATCC 700860 / DSM 12428 / JCM 9974 / NBRC 100139 / OT-3) protein is tRNA(Phe) 7-((3-amino-3-carboxypropyl)-4-demethylwyosine(37)-N(4))-methyltransferase 1.